A 360-amino-acid chain; its full sequence is POU domain, class 5, transcription factor 1 (360 aa).

2 disordered regions span residues M1 to G50 and Q87 to P118. A 9aaTAD motif is present at residues H4–S12. Over residues P41 to G50 the composition is skewed to gly residues. Position 111 is a phosphoserine; by MAPK (S111). K123 is covalently cross-linked (Glycyl lysine isopeptide (Lys-Gly) (interchain with G-Cter in SUMO)). Residues D138–D212 form the POU-specific domain. DNA contacts are provided by R157 and Q164. 2 DNA-binding regions span residues S180–R186 and S193–N196. The homeobox DNA-binding region spans R230 to S289. T235 carries the phosphothreonine modification. A phosphoserine mark is found at S236, S289, and S290. A disordered region spans residues R287–P316. Positions G302–P313 are enriched in low complexity. A Phosphoserine modification is found at S355.

Belongs to the POU transcription factor family. Class-5 subfamily. In terms of assembly, interacts with PKM. Interacts with WWP2. Interacts with UBE2I and ZSCAN10. Interacts with PCGF1. Interacts with ESRRB; recruits ESRRB near the POU5F1-SOX2 element in the NANOG proximal promoter; the interaction is DNA independent. Interacts with ZNF322. Interacts with MAPK8 and MAPK9; the interaction allows MAPK8 and MAPK9 to phosphorylate POU5F1 on Ser-355. Interacts (when phosphorylated on Ser-355) with FBXW8. Interacts with FBXW4. Interacts with SOX2 and SOX15; binds synergistically with either SOX2 or SOX15 to DNA. Interacts with DDX56. Sumoylation enhances the protein stability, DNA binding and transactivation activity. Sumoylation is required for enhanced YES1 expression. Post-translationally, ubiquitinated; undergoes 'Lys-63'-linked polyubiquitination by WWP2 leading to proteasomal degradation. In terms of processing, ERK1/2-mediated phosphorylation at Ser-111 promotes nuclear exclusion and proteasomal degradation. Phosphorylation at Thr-235 and Ser-236 decrease DNA-binding and alters ability to activate transcription.

It is found in the cytoplasm. The protein resides in the nucleus. Functionally, transcription factor that binds to the octamer motif (5'-ATTTGCAT-3'). Forms a trimeric complex with SOX2 or SOX15 on DNA and controls the expression of a number of genes involved in embryonic development such as YES1, FGF4, UTF1 and ZFP206. Critical for early embryogenesis and for embryonic stem cell pluripotency. This Sus scrofa (Pig) protein is POU domain, class 5, transcription factor 1 (POU5F1).